A 502-amino-acid chain; its full sequence is tRNA (guanine-N(7)-)-methyltransferase non-catalytic subunit trm82 (502 aa).

WD repeat units follow at residues Asn4–Thr58, Thr95–Gln135, and Gly290–Lys330. A disordered region spans residues Thr58–Ala93.

This sequence belongs to the WD repeat TRM82 family. As to quaternary structure, forms a heterodimer with the catalytic subunit trm8.

The protein resides in the nucleus. The protein operates within tRNA modification; N(7)-methylguanine-tRNA biosynthesis. Functionally, required for the formation of N(7)-methylguanine at position 46 (m7G46) in tRNA. In the complex, it is required to stabilize and induce conformational changes of the catalytic subunit. This chain is tRNA (guanine-N(7)-)-methyltransferase non-catalytic subunit trm82 (trm82), found in Aspergillus fumigatus (strain CBS 144.89 / FGSC A1163 / CEA10) (Neosartorya fumigata).